Consider the following 74-residue polypeptide: Putative defensin-like protein 128 (74 aa).

A signal peptide spans 1 to 24; sequence MSKLTNVVIFIVFFLGMMAKETQG. 4 disulfides stabilise this stretch: cysteine 28/cysteine 72, cysteine 37/cysteine 56, cysteine 42/cysteine 66, and cysteine 46/cysteine 68.

The protein belongs to the DEFL family.

The protein localises to the secreted. This chain is Putative defensin-like protein 128 (LCR8), found in Arabidopsis thaliana (Mouse-ear cress).